A 911-amino-acid chain; its full sequence is Protein translocase subunit SecA (911 aa).

ATP is bound by residues Q87, 105–109 (GEGKT), and D512. The disordered stretch occupies residues 861–880 (APGLGSEQLSEEGAEVAVAS). Residues C895, C897, C906, and H907 each contribute to the Zn(2+) site.

This sequence belongs to the SecA family. As to quaternary structure, monomer and homodimer. Part of the essential Sec protein translocation apparatus which comprises SecA, SecYEG and auxiliary proteins SecDF-YajC and YidC. Zn(2+) is required as a cofactor.

The protein resides in the cell inner membrane. It localises to the cytoplasm. The catalysed reaction is ATP + H2O + cellular proteinSide 1 = ADP + phosphate + cellular proteinSide 2.. Part of the Sec protein translocase complex. Interacts with the SecYEG preprotein conducting channel. Has a central role in coupling the hydrolysis of ATP to the transfer of proteins into and across the cell membrane, serving both as a receptor for the preprotein-SecB complex and as an ATP-driven molecular motor driving the stepwise translocation of polypeptide chains across the membrane. This is Protein translocase subunit SecA from Pseudomonas putida (strain ATCC 47054 / DSM 6125 / CFBP 8728 / NCIMB 11950 / KT2440).